The sequence spans 319 residues: Taste receptor type 2 member 30 (319 aa).

M1 is a topological domain (extracellular). The helical transmembrane segment at 2-22 threads the bilayer; the sequence is ITFLPIIFSILIVVIFVIGNF. At 23-46 the chain is on the cytoplasmic side; that stretch reads ANGFIALVNSIEWVKRQKISFVDQ. Residues 47–67 form a helical membrane-spanning segment; that stretch reads ILTALAVSRVGLLWVLLLHWY. Residues 68–86 are Extracellular-facing; that stretch reads ATQLNPAFYSVEVRITAYN. Residues 87–107 traverse the membrane as a helical segment; that stretch reads VWAVTNHFSSWLATSLSMFYL. At 108 to 126 the chain is on the cytoplasmic side; that stretch reads LRIANFSNLIFLRIKRRVK. Residues 127–147 traverse the membrane as a helical segment; it reads SVVLVILLGPLLFLVCHLFVI. Residues 148–178 lie on the Extracellular side of the membrane; the sequence is NMDETVWTKEYEGNVTWKIKLRSAMYHSNMT. Residues N161 and N176 are each glycosylated (N-linked (GlcNAc...) asparagine). The chain crosses the membrane as a helical span at residues 179-199; it reads LTMLANFVPLTLTLISFLLLI. Over 200-229 the chain is Cytoplasmic; sequence CSLCKHLKKMQLHGKGSQDPSTKVHIKALQ. The helical transmembrane segment at 230-250 threads the bilayer; it reads TVTSFLLLCAIYFLSMIISVC. At 251–259 the chain is on the extracellular side; sequence NFGRLEKQP. Residues 260–280 traverse the membrane as a helical segment; sequence VFMFCQAIIFSYPSTHPFILI. The Cytoplasmic segment spans residues 281 to 319; it reads LGNKKLKQIFLSVLRHVRYWVKDRSLRLHRFTRGALCVF.

It belongs to the G-protein coupled receptor T2R family. Expressed in subsets of taste receptor cells of the tongue and exclusively in gustducin-positive cells.

The protein resides in the membrane. Its function is as follows. Receptor that may play a role in the perception of bitterness and is gustducin-linked. May play a role in sensing the chemical composition of the gastrointestinal content. The activity of this receptor may stimulate alpha gustducin, mediate PLC-beta-2 activation and lead to the gating of TRPM5. The protein is Taste receptor type 2 member 30 (TAS2R30) of Homo sapiens (Human).